The following is a 375-amino-acid chain: Muconate cycloisomerase 1 (375 aa).

Catalysis depends on Lys-171, which acts as the Proton acceptor. The Mn(2+) site is built by Asp-200, Glu-226, and Asp-251. The active-site Proton donor is Glu-329.

It belongs to the mandelate racemase/muconate lactonizing enzyme family. In terms of assembly, homooctamer. It depends on Mn(2+) as a cofactor.

The catalysed reaction is (S)-muconolactone = cis,cis-muconate + H(+). It participates in aromatic compound metabolism; beta-ketoadipate pathway; 5-oxo-4,5-dihydro-2-furylacetate from catechol: step 2/3. Functionally, catalyzes a syn cycloisomerization. This Pseudomonas putida (Arthrobacter siderocapsulatus) protein is Muconate cycloisomerase 1 (catB).